A 75-amino-acid chain; its full sequence is MNVGDRVRVTSSVVVYHHPEHKKTAFDLQGMEGEVAAVLTEWQGRPISANLPVLVKFEQRFKAHFRPDEVTLIED.

Residues 43–46 (QGRP) are interaction with ferredoxin.

It belongs to the ferredoxin thioredoxin reductase alpha subunit family. As to quaternary structure, heterodimer of subunit A (variable subunit) and subunit B (catalytic subunit). Heterodimeric FTR forms a complex with ferredoxin and thioredoxin.

In terms of biological role, variable subunit of the ferredoxin-thioredoxin reductase (FTR), which catalyzes the two-electron reduction of thioredoxins by the electrons provided by reduced ferredoxin. The protein is Ferredoxin-thioredoxin reductase, variable chain (ftrV) of Synechocystis sp. (strain ATCC 27184 / PCC 6803 / Kazusa).